Consider the following 221-residue polypeptide: Epididymal secretory glutathione peroxidase (221 aa).

The first 21 residues, 1–21 (MVTELRVFYLVPLLLASYVQT), serve as a signal peptide directing secretion. The active site involves cysteine 73.

It belongs to the glutathione peroxidase family. In terms of tissue distribution, epididymis.

Its subcellular location is the secreted. The catalysed reaction is 2 glutathione + H2O2 = glutathione disulfide + 2 H2O. Functionally, protects cells and enzymes from oxidative damage, by catalyzing the reduction of hydrogen peroxide, lipid peroxides and organic hydroperoxide, by glutathione. May constitute a glutathione peroxidase-like protective system against peroxide damage in sperm membrane lipids. This is Epididymal secretory glutathione peroxidase (Gpx5) from Mus musculus (Mouse).